Consider the following 92-residue polypeptide: Putative phosphotransferase enzyme IIB component SgcB (92 aa).

Positions Met-1–Gln-92 constitute a PTS EIIB type-2 domain. The active-site Phosphocysteine intermediate is Cys-8.

Its subcellular location is the cytoplasm. The phosphoenolpyruvate-dependent sugar phosphotransferase system (sugar PTS), a major carbohydrate active -transport system, catalyzes the phosphorylation of incoming sugar substrates concomitantly with their translocation across the cell membrane. This Escherichia coli (strain K12) protein is Putative phosphotransferase enzyme IIB component SgcB (sgcB).